The sequence spans 428 residues: Probable protein phosphatase 2C 5 (428 aa).

A PPM-type phosphatase domain is found at 25-297 (RSEKVEKPFV…DDTTCVVVDI (273 aa)). Asp73, Gly74, Asp249, and Asp288 together coordinate Mn(2+).

This sequence belongs to the PP2C family. Mg(2+) serves as cofactor. The cofactor is Mn(2+).

It carries out the reaction O-phospho-L-seryl-[protein] + H2O = L-seryl-[protein] + phosphate. The enzyme catalyses O-phospho-L-threonyl-[protein] + H2O = L-threonyl-[protein] + phosphate. This chain is Probable protein phosphatase 2C 5, found in Arabidopsis thaliana (Mouse-ear cress).